A 259-amino-acid chain; its full sequence is MAATGEALTTQGYISHHLHHLQVGSGFWTVNIDSMIFSVILGALFIWIFRKVAATATSGVPGKLQCFVEMVVEFVDDTVKGIFHGKSKLIAPLALTVFIWVFLMNLMDLIPVDYLPYTAQVLGIPYLRVVPSADVNITMSMALGVFALIIIYSIKMKGVSGFVKELTLNPFNHWALIPVNLALELVTLLSKPISLGLRLFGNMYAGELVFILIAGLLPWWSQWLLSVPWALFHILVITLQAFIFMVLTIVYLSMASEDH.

Transmembrane regions (helical) follow at residues 29-49, 90-110, 134-154, 208-228, and 230-250; these read TVNI…IWIF, IAPL…MDLI, DVNI…IYSI, LVFI…LSVP, and ALFH…LTIV.

This sequence belongs to the ATPase A chain family. As to quaternary structure, F-type ATPases have 2 components, CF(1) - the catalytic core - and CF(0) - the membrane proton channel. CF(1) has five subunits: alpha(3), beta(3), gamma(1), delta(1), epsilon(1). CF(0) has three main subunits: a(1), b(2) and c(9-12). The alpha and beta chains form an alternating ring which encloses part of the gamma chain. CF(1) is attached to CF(0) by a central stalk formed by the gamma and epsilon chains, while a peripheral stalk is formed by the delta and b chains.

The protein resides in the cell inner membrane. Functionally, key component of the proton channel; it plays a direct role in the translocation of protons across the membrane. In Aeromonas salmonicida (strain A449), this protein is ATP synthase subunit a.